The following is a 189-amino-acid chain: Peptidyl-tRNA hydrolase (189 aa).

Position 15 (Y15) interacts with tRNA. H20 serves as the catalytic Proton acceptor. Positions 66, 68, and 114 each coordinate tRNA.

This sequence belongs to the PTH family. In terms of assembly, monomer.

It is found in the cytoplasm. The catalysed reaction is an N-acyl-L-alpha-aminoacyl-tRNA + H2O = an N-acyl-L-amino acid + a tRNA + H(+). In terms of biological role, hydrolyzes ribosome-free peptidyl-tRNAs (with 1 or more amino acids incorporated), which drop off the ribosome during protein synthesis, or as a result of ribosome stalling. Catalyzes the release of premature peptidyl moieties from peptidyl-tRNA molecules trapped in stalled 50S ribosomal subunits, and thus maintains levels of free tRNAs and 50S ribosomes. The protein is Peptidyl-tRNA hydrolase of Streptococcus sanguinis (strain SK36).